Reading from the N-terminus, the 239-residue chain is Elongation factor Ts (239 aa).

The involved in Mg(2+) ion dislocation from EF-Tu stretch occupies residues 82-85; sequence TDFV. The interval 213–239 is disordered; sequence AAQTKPKAEEKPAAKKATSKKKKGKKK. The span at 229–239 shows a compositional bias: basic residues; sequence ATSKKKKGKKK.

Belongs to the EF-Ts family.

It is found in the cytoplasm. In terms of biological role, associates with the EF-Tu.GDP complex and induces the exchange of GDP to GTP. It remains bound to the aminoacyl-tRNA.EF-Tu.GTP complex up to the GTP hydrolysis stage on the ribosome. In Acaryochloris marina (strain MBIC 11017), this protein is Elongation factor Ts.